We begin with the raw amino-acid sequence, 965 residues long: Glycine dehydrogenase (decarboxylating) 1 (965 aa).

Lys713 carries the N6-(pyridoxal phosphate)lysine modification.

It belongs to the GcvP family. As to quaternary structure, the glycine cleavage system is composed of four proteins: P, T, L and H. Requires pyridoxal 5'-phosphate as cofactor.

The catalysed reaction is N(6)-[(R)-lipoyl]-L-lysyl-[glycine-cleavage complex H protein] + glycine + H(+) = N(6)-[(R)-S(8)-aminomethyldihydrolipoyl]-L-lysyl-[glycine-cleavage complex H protein] + CO2. The glycine cleavage system catalyzes the degradation of glycine. The P protein binds the alpha-amino group of glycine through its pyridoxal phosphate cofactor; CO(2) is released and the remaining methylamine moiety is then transferred to the lipoamide cofactor of the H protein. This is Glycine dehydrogenase (decarboxylating) 1 from Colwellia psychrerythraea (strain 34H / ATCC BAA-681) (Vibrio psychroerythus).